Consider the following 256-residue polypeptide: Adenylate kinase (256 aa).

49–54 provides a ligand contact to ATP; it reads GAGKGT. The tract at residues 69-98 is NMP; the sequence is ATGDMLREQVQQKTPLGIEAKKIMDAGGLV. Residues T70, R75, 96-98, 125-128, and Q132 each bind AMP; these read GLV and GFPR. The tract at residues 166-203 is LID; that stretch reads GRLVHPASGRSYHKEFNPPKKRNVDDVTGEPLIQRSDD. ATP is bound by residues R167 and 176–177; that span reads SY. 2 residues coordinate AMP: R200 and R211. Q239 contributes to the ATP binding site.

The protein belongs to the adenylate kinase family. AK2 subfamily. In terms of assembly, monomer.

The protein resides in the cytoplasm. Its subcellular location is the cytosol. It is found in the mitochondrion intermembrane space. The catalysed reaction is AMP + ATP = 2 ADP. In terms of biological role, catalyzes the reversible transfer of the terminal phosphate group between ATP and AMP. Plays an important role in cellular energy homeostasis and in adenine nucleotide metabolism. Adenylate kinase activity is critical for regulation of the phosphate utilization and the AMP de novo biosynthesis pathways. This Laccaria bicolor (strain S238N-H82 / ATCC MYA-4686) (Bicoloured deceiver) protein is Adenylate kinase.